The primary structure comprises 589 residues: Pyruvate kinase (589 aa).

Position 32 (Arg32) interacts with substrate. The K(+) site is built by Asn34, Ser36, Asp66, and Thr67. ATP is bound at residue 34 to 37 (NFSH). ATP contacts are provided by Arg73 and Lys157. Position 223 (Glu223) interacts with Mg(2+). Substrate-binding residues include Gly246, Asp247, and Thr279. Asp247 lines the Mg(2+) pocket.

This sequence belongs to the pyruvate kinase family. It in the C-terminal section; belongs to the PEP-utilizing enzyme family. Homotetramer. It depends on Mg(2+) as a cofactor. K(+) is required as a cofactor.

The catalysed reaction is pyruvate + ATP = phosphoenolpyruvate + ADP + H(+). Its pathway is carbohydrate degradation; glycolysis; pyruvate from D-glyceraldehyde 3-phosphate: step 5/5. Strongly activated by glucose-6-phosphate, ribose-5-phosphate and fructose-6-phosphate. Weak activator AMP and weak inhibitor fructose-1,6-bisphosphate can act as strong inhibitors in the presence of strong activators. The protein is Pyruvate kinase (pyk) of Lactobacillus delbrueckii subsp. bulgaricus.